Reading from the N-terminus, the 196-residue chain is Protein GrpE (196 aa).

Residues 1–40 are disordered; the sequence is MSSKEQKTPEGQAPEEIIMDQHEEVEAVEPNDSAEQVDPR.

The protein belongs to the GrpE family. As to quaternary structure, homodimer.

Its subcellular location is the cytoplasm. Participates actively in the response to hyperosmotic and heat shock by preventing the aggregation of stress-denatured proteins, in association with DnaK and GrpE. It is the nucleotide exchange factor for DnaK and may function as a thermosensor. Unfolded proteins bind initially to DnaJ; upon interaction with the DnaJ-bound protein, DnaK hydrolyzes its bound ATP, resulting in the formation of a stable complex. GrpE releases ADP from DnaK; ATP binding to DnaK triggers the release of the substrate protein, thus completing the reaction cycle. Several rounds of ATP-dependent interactions between DnaJ, DnaK and GrpE are required for fully efficient folding. The sequence is that of Protein GrpE from Salmonella gallinarum (strain 287/91 / NCTC 13346).